We begin with the raw amino-acid sequence, 156 residues long: MAVKIKLTRLGKIRNAQYRVVIADSRTRRDGRAIETIGKYHPKEEPSLIDIDSERAQYWLSVGAQPTEPVEALLKITGDWQKFKGLPGTEGTLRVKEAKPTKLELFQAALAQAENEPVAEAITPKKKKAAKADEAKAEDTAADAEAPAADAEAADK.

Positions 114 to 156 are disordered; sequence ENEPVAEAITPKKKKAAKADEAKAEDTAADAEAPAADAEAADK. Positions 130–139 are enriched in basic and acidic residues; the sequence is AKADEAKAED. Residues 143–156 are compositionally biased toward low complexity; sequence DAEAPAADAEAADK.

The protein belongs to the bacterial ribosomal protein bS16 family.

This chain is Small ribosomal subunit protein bS16, found in Rhodococcus erythropolis (strain PR4 / NBRC 100887).